Reading from the N-terminus, the 126-residue chain is Large ribosomal subunit protein bL12 (126 aa).

The protein belongs to the bacterial ribosomal protein bL12 family. As to quaternary structure, homodimer. Part of the ribosomal stalk of the 50S ribosomal subunit. Forms a multimeric L10(L12)X complex, where L10 forms an elongated spine to which 2 to 4 L12 dimers bind in a sequential fashion. Binds GTP-bound translation factors.

Functionally, forms part of the ribosomal stalk which helps the ribosome interact with GTP-bound translation factors. Is thus essential for accurate translation. The sequence is that of Large ribosomal subunit protein bL12 from Francisella tularensis subsp. mediasiatica (strain FSC147).